Consider the following 130-residue polypeptide: Ribosome biogenesis inhibitor MINAS-60 (130 aa).

The segment at 61-130 (SRVRRIPTRP…RRRRPVTSSC (70 aa)) is disordered. Residues 109-130 (KGRRRRRRRMRRRRRRPVTSSC) show a composition bias toward basic residues.

As to quaternary structure, interacts with 60S ribosome assembly factors GTPBP4 and MRTO4.

The protein localises to the nucleus. It localises to the nucleolus. Acts as a late-stage inhibitor of pre-60S ribosome assembly by preventing pre-60S ribosome export from nucleus. The polypeptide is Ribosome biogenesis inhibitor MINAS-60 (Homo sapiens (Human)).